Here is a 633-residue protein sequence, read N- to C-terminus: Chaperone protein DnaK (633 aa).

The residue at position 198 (Thr-198) is a Phosphothreonine; by autocatalysis.

The protein belongs to the heat shock protein 70 family.

Its function is as follows. Acts as a chaperone. The chain is Chaperone protein DnaK from Rhodopseudomonas palustris (strain BisA53).